A 259-amino-acid polypeptide reads, in one-letter code: Probable metal transport system ATP-binding protein CT_068 (259 aa).

The region spanning W9–L241 is the ABC transporter domain. G41–S48 lines the ATP pocket.

The protein belongs to the ABC transporter superfamily.

Its subcellular location is the cell inner membrane. Functionally, part of an ATP-driven transport system CT_067/CT_068/CT_069/CT_070 for a metal. Probably responsible for energy coupling to the transport system. This Chlamydia trachomatis serovar D (strain ATCC VR-885 / DSM 19411 / UW-3/Cx) protein is Probable metal transport system ATP-binding protein CT_068.